Consider the following 353-residue polypeptide: 3-dehydroquinate synthase (353 aa).

NAD(+)-binding positions include 62 to 67 (DGEQYK), 96 to 100 (GVIGD), 120 to 121 (TT), Lys133, and Lys142. Zn(2+) is bound by residues Glu175, His236, and His253.

This sequence belongs to the sugar phosphate cyclases superfamily. Dehydroquinate synthase family. The cofactor is NAD(+). Co(2+) serves as cofactor. Requires Zn(2+) as cofactor.

It localises to the cytoplasm. The enzyme catalyses 7-phospho-2-dehydro-3-deoxy-D-arabino-heptonate = 3-dehydroquinate + phosphate. It participates in metabolic intermediate biosynthesis; chorismate biosynthesis; chorismate from D-erythrose 4-phosphate and phosphoenolpyruvate: step 2/7. In terms of biological role, catalyzes the conversion of 3-deoxy-D-arabino-heptulosonate 7-phosphate (DAHP) to dehydroquinate (DHQ). In Helicobacter hepaticus (strain ATCC 51449 / 3B1), this protein is 3-dehydroquinate synthase.